The following is a 127-amino-acid chain: Small ribosomal subunit protein uS12 (127 aa).

A 3-methylthioaspartic acid modification is found at D89.

Belongs to the universal ribosomal protein uS12 family. Part of the 30S ribosomal subunit. Contacts proteins S8 and S17. May interact with IF1 in the 30S initiation complex.

With S4 and S5 plays an important role in translational accuracy. In terms of biological role, interacts with and stabilizes bases of the 16S rRNA that are involved in tRNA selection in the A site and with the mRNA backbone. Located at the interface of the 30S and 50S subunits, it traverses the body of the 30S subunit contacting proteins on the other side and probably holding the rRNA structure together. The combined cluster of proteins S8, S12 and S17 appears to hold together the shoulder and platform of the 30S subunit. The polypeptide is Small ribosomal subunit protein uS12 (Nautilia profundicola (strain ATCC BAA-1463 / DSM 18972 / AmH)).